The following is a 356-amino-acid chain: Holliday junction branch migration complex subunit RuvB (356 aa).

Residues 13-197 (LPPARRMLSA…FGIVARLEFY (185 aa)) are large ATPase domain (RuvB-L). ATP contacts are provided by residues Leu-36, Arg-37, Gly-78, Lys-81, Thr-82, Thr-83, 144–146 (EDY), Arg-187, Tyr-197, and Arg-234. Thr-82 serves as a coordination point for Mg(2+). The tract at residues 198-268 (TPEELARIVK…IANRALAMLD (71 aa)) is small ATPAse domain (RuvB-S). The interval 271–356 (PQGFDLMDRK…RGNAENLFEE (86 aa)) is head domain (RuvB-H). Residues Arg-326 and Arg-331 each contribute to the DNA site.

Belongs to the RuvB family. In terms of assembly, homohexamer. Forms an RuvA(8)-RuvB(12)-Holliday junction (HJ) complex. HJ DNA is sandwiched between 2 RuvA tetramers; dsDNA enters through RuvA and exits via RuvB. An RuvB hexamer assembles on each DNA strand where it exits the tetramer. Each RuvB hexamer is contacted by two RuvA subunits (via domain III) on 2 adjacent RuvB subunits; this complex drives branch migration. In the full resolvosome a probable DNA-RuvA(4)-RuvB(12)-RuvC(2) complex forms which resolves the HJ.

The protein localises to the cytoplasm. It carries out the reaction ATP + H2O = ADP + phosphate + H(+). In terms of biological role, the RuvA-RuvB-RuvC complex processes Holliday junction (HJ) DNA during genetic recombination and DNA repair, while the RuvA-RuvB complex plays an important role in the rescue of blocked DNA replication forks via replication fork reversal (RFR). RuvA specifically binds to HJ cruciform DNA, conferring on it an open structure. The RuvB hexamer acts as an ATP-dependent pump, pulling dsDNA into and through the RuvAB complex. RuvB forms 2 homohexamers on either side of HJ DNA bound by 1 or 2 RuvA tetramers; 4 subunits per hexamer contact DNA at a time. Coordinated motions by a converter formed by DNA-disengaged RuvB subunits stimulates ATP hydrolysis and nucleotide exchange. Immobilization of the converter enables RuvB to convert the ATP-contained energy into a lever motion, pulling 2 nucleotides of DNA out of the RuvA tetramer per ATP hydrolyzed, thus driving DNA branch migration. The RuvB motors rotate together with the DNA substrate, which together with the progressing nucleotide cycle form the mechanistic basis for DNA recombination by continuous HJ branch migration. Branch migration allows RuvC to scan DNA until it finds its consensus sequence, where it cleaves and resolves cruciform DNA. This Polaromonas naphthalenivorans (strain CJ2) protein is Holliday junction branch migration complex subunit RuvB.